The sequence spans 397 residues: Chorismate synthase (397 aa).

Positions 40 and 46 each coordinate NADP(+). Residues 129–131, 257–258, G302, 317–321, and R343 contribute to the FMN site; these read RSS, QA, and KPISS.

Belongs to the chorismate synthase family. Homotetramer. Requires FMNH2 as cofactor.

It carries out the reaction 5-O-(1-carboxyvinyl)-3-phosphoshikimate = chorismate + phosphate. It participates in metabolic intermediate biosynthesis; chorismate biosynthesis; chorismate from D-erythrose 4-phosphate and phosphoenolpyruvate: step 7/7. Functionally, catalyzes the anti-1,4-elimination of the C-3 phosphate and the C-6 proR hydrogen from 5-enolpyruvylshikimate-3-phosphate (EPSP) to yield chorismate, which is the branch point compound that serves as the starting substrate for the three terminal pathways of aromatic amino acid biosynthesis. This reaction introduces a second double bond into the aromatic ring system. The polypeptide is Chorismate synthase (Chlorobium limicola (strain DSM 245 / NBRC 103803 / 6330)).